The chain runs to 483 residues: Cysteine--tRNA ligase (483 aa).

Residue Cys-29 coordinates Zn(2+). Residues 31-41 carry the 'HIGH' region motif; that stretch reads ITVYDYCHLGH. Zn(2+) contacts are provided by Cys-215, His-240, and Glu-244. A 'KMSKS' region motif is present at residues 272–276; it reads KMSKS. Residue Lys-275 coordinates ATP.

The protein belongs to the class-I aminoacyl-tRNA synthetase family. As to quaternary structure, monomer. It depends on Zn(2+) as a cofactor.

The protein localises to the cytoplasm. The catalysed reaction is tRNA(Cys) + L-cysteine + ATP = L-cysteinyl-tRNA(Cys) + AMP + diphosphate. The polypeptide is Cysteine--tRNA ligase (cysS) (Synechocystis sp. (strain ATCC 27184 / PCC 6803 / Kazusa)).